Here is a 352-residue protein sequence, read N- to C-terminus: Histidinol-phosphate aminotransferase 1 (352 aa).

At Lys211 the chain carries N6-(pyridoxal phosphate)lysine.

The protein belongs to the class-II pyridoxal-phosphate-dependent aminotransferase family. Histidinol-phosphate aminotransferase subfamily. In terms of assembly, homodimer. Pyridoxal 5'-phosphate is required as a cofactor.

It catalyses the reaction L-histidinol phosphate + 2-oxoglutarate = 3-(imidazol-4-yl)-2-oxopropyl phosphate + L-glutamate. It functions in the pathway amino-acid biosynthesis; L-histidine biosynthesis; L-histidine from 5-phospho-alpha-D-ribose 1-diphosphate: step 7/9. The chain is Histidinol-phosphate aminotransferase 1 from Haemophilus influenzae (strain 86-028NP).